The sequence spans 351 residues: Phosphoribosylformylglycinamidine cyclo-ligase (351 aa).

The protein belongs to the AIR synthase family.

The protein resides in the cytoplasm. It carries out the reaction 2-formamido-N(1)-(5-O-phospho-beta-D-ribosyl)acetamidine + ATP = 5-amino-1-(5-phospho-beta-D-ribosyl)imidazole + ADP + phosphate + H(+). It participates in purine metabolism; IMP biosynthesis via de novo pathway; 5-amino-1-(5-phospho-D-ribosyl)imidazole from N(2)-formyl-N(1)-(5-phospho-D-ribosyl)glycinamide: step 2/2. The protein is Phosphoribosylformylglycinamidine cyclo-ligase of Burkholderia cenocepacia (strain ATCC BAA-245 / DSM 16553 / LMG 16656 / NCTC 13227 / J2315 / CF5610) (Burkholderia cepacia (strain J2315)).